The following is a 279-amino-acid chain: Acetyl-coenzyme A carboxylase carboxyl transferase subunit beta (279 aa).

A CoA carboxyltransferase N-terminal domain is found at 23-279; the sequence is MWWKCDECGA…IVRLMTMLAP (257 aa). Zn(2+)-binding residues include cysteine 27, cysteine 30, cysteine 46, and cysteine 49. A C4-type zinc finger spans residues 27–49; the sequence is CDECGAMLHKKQLEDNFYTCSEC.

This sequence belongs to the AccD/PCCB family. Acetyl-CoA carboxylase is a heterohexamer composed of biotin carboxyl carrier protein (AccB), biotin carboxylase (AccC) and two subunits each of ACCase subunit alpha (AccA) and ACCase subunit beta (AccD). Requires Zn(2+) as cofactor.

The protein localises to the cytoplasm. The catalysed reaction is N(6)-carboxybiotinyl-L-lysyl-[protein] + acetyl-CoA = N(6)-biotinyl-L-lysyl-[protein] + malonyl-CoA. The protein operates within lipid metabolism; malonyl-CoA biosynthesis; malonyl-CoA from acetyl-CoA: step 1/1. Functionally, component of the acetyl coenzyme A carboxylase (ACC) complex. Biotin carboxylase (BC) catalyzes the carboxylation of biotin on its carrier protein (BCCP) and then the CO(2) group is transferred by the transcarboxylase to acetyl-CoA to form malonyl-CoA. The polypeptide is Acetyl-coenzyme A carboxylase carboxyl transferase subunit beta (Chlorobium phaeobacteroides (strain DSM 266 / SMG 266 / 2430)).